Consider the following 118-residue polypeptide: Vesicle-associated membrane protein 1 (118 aa).

The span at 1-15 (MSAPAQPPAEGTEGA) shows a compositional bias: low complexity. The interval 1–38 (MSAPAQPPAEGTEGAAPGGGPPGPPPNTTSNRRLQQTQ) is disordered. Residues 1-96 (MSAPAQPPAE…KRKYWWKNCK (96 aa)) lie on the Cytoplasmic side of the membrane. A compositionally biased stretch (polar residues) spans 28–38 (TTSNRRLQQTQ). In terms of domain architecture, v-SNARE coiled-coil homology spans 33–93 (RLQQTQAQVE…AKLKRKYWWK (61 aa)). S63 is modified (phosphoserine). The chain crosses the membrane as a helical; Anchor for type IV membrane protein span at residues 97-116 (MMIMLGAICAIIVVVIVIYI). At 117 to 118 (FT) the chain is on the vesicular side.

The protein belongs to the synaptobrevin family. In terms of assembly, interacts with VAPA and VAPB. In terms of processing, (Microbial infection) Targeted and hydrolyzed by C.botulinum neurotoxin type D (BoNT/D, botD) which hydrolyzes the 61-Lys-|-Leu-62 bond and inhibits neurotransmitter release. This is a poor substrate for BoNT/D, high concentrations are required to cleave it in vitro. (Microbial infection) Targeted and hydrolyzed by C.botulinum neurotoxin type F (BoNT/F, botF) which hydrolyzes the 60-Gln-|-Lys-61 bond and inhibits neurotransmitter release. In terms of tissue distribution, expressed in brain and spleen (at protein level). Isoform 1 expressed at very high level in brain. Even higher level found in spinal cord. Isoform 3 expressed in kidney, spleen and liver. Isoforms 2 and 3 expressed in osteoblasts of trabecular bone. Also expressed in heart.

It localises to the cytoplasmic vesicle. The protein localises to the secretory vesicle. The protein resides in the synaptic vesicle membrane. Its subcellular location is the synapse. It is found in the synaptosome. It localises to the cytoplasmic vesicle membrane. The protein localises to the mitochondrion outer membrane. In terms of biological role, involved in the targeting and/or fusion of transport vesicles to their target membrane. The chain is Vesicle-associated membrane protein 1 (Vamp1) from Rattus norvegicus (Rat).